The sequence spans 408 residues: Multidrug resistance protein MdtG (408 aa).

A run of 11 helical transmembrane segments spans residues 16–36 (LIVA…VMPF), 58–78 (IVFS…GGLA), 92–112 (LGMG…QFLI), 115–135 (ALLG…ATQV), 146–166 (TLST…GLLA), 173–193 (PVFF…LFCI), 224–244 (LFVT…ILTL), 256–276 (VAFI…LSAP), 290–310 (ILIT…YVQT), 319–339 (FLLG…LVYN), and 378–398 (AVFL…WNSL).

The protein belongs to the major facilitator superfamily. DHA1 family. MdtG (TC 2.A.1.2.20) subfamily.

The protein resides in the cell inner membrane. Its function is as follows. Confers resistance to fosfomycin and deoxycholate. In Escherichia coli O127:H6 (strain E2348/69 / EPEC), this protein is Multidrug resistance protein MdtG.